Reading from the N-terminus, the 400-residue chain is Elongation factor Tu (400 aa).

In terms of domain architecture, tr-type G spans 10-209; the sequence is KPHVNIGTIG…AVDKYIPTPQ (200 aa). The segment at 19 to 26 is G1; that stretch reads GHVDHGKT. A GTP-binding site is contributed by 19–26; sequence GHVDHGKT. Residue Thr-26 coordinates Mg(2+). The tract at residues 60-64 is G2; the sequence is GITIN. The G3 stretch occupies residues 81–84; that stretch reads DCPG. GTP is bound by residues 81–85 and 136–139; these read DCPGH and NKVD. The segment at 136–139 is G4; that stretch reads NKVD. Residues 174–176 form a G5 region; that stretch reads SAL.

Belongs to the TRAFAC class translation factor GTPase superfamily. Classic translation factor GTPase family. EF-Tu/EF-1A subfamily. In terms of assembly, monomer.

It is found in the cytoplasm. The catalysed reaction is GTP + H2O = GDP + phosphate + H(+). GTP hydrolase that promotes the GTP-dependent binding of aminoacyl-tRNA to the A-site of ribosomes during protein biosynthesis. The chain is Elongation factor Tu from Caldicellulosiruptor bescii (strain ATCC BAA-1888 / DSM 6725 / KCTC 15123 / Z-1320) (Anaerocellum thermophilum).